A 126-amino-acid polypeptide reads, in one-letter code: C-type natriuretic peptide (126 aa).

A signal peptide spans 1 to 23 (MHLSQLIACALLLALLSLRPSEA). Residues 19 to 71 (RPSEAKPGTPPKVPRTPPGEELAEPQAAGGNQKKGDKTPGGGGANLKGDRSRL) form a disordered region. The propeptide occupies 24-73 (KPGTPPKVPRTPPGEELAEPQAAGGNQKKGDKTPGGGGANLKGDRSRLLR). The span at 26-35 (GTPPKVPRTP) shows a compositional bias: pro residues. A disulfide bridge connects residues cysteine 110 and cysteine 126.

The protein belongs to the natriuretic peptide family. In terms of processing, degraded by IDE (in vitro). In terms of tissue distribution, expressed exclusively in brain.

The protein resides in the secreted. Hormone which plays a role in endochondral ossification through regulation of cartilaginous growth plate chondrocytes proliferation and differentiation. May also be vasoactive and natriuretic. Acts by specifically binding and stimulating NPR2 to produce cGMP. Binds the clearance receptor NPR3. The protein is C-type natriuretic peptide (Nppc) of Rattus norvegicus (Rat).